The chain runs to 216 residues: 3-keto-L-gulonate-6-phosphate decarboxylase UlaD (216 aa).

Aspartate 11 contributes to the substrate binding site. Positions 33 and 62 each coordinate Mg(2+). Arginine 192 provides a ligand contact to substrate.

It belongs to the HPS/KGPDC family. KGPDC subfamily. As to quaternary structure, homodimer. The cofactor is Mg(2+).

The enzyme catalyses 3-dehydro-L-gulonate 6-phosphate + H(+) = L-xylulose 5-phosphate + CO2. It participates in cofactor degradation; L-ascorbate degradation; D-xylulose 5-phosphate from L-ascorbate: step 2/4. Catalyzes the decarboxylation of 3-keto-L-gulonate-6-P into L-xylulose-5-P. Is involved in the anaerobic L-ascorbate utilization. In Escherichia fergusonii (strain ATCC 35469 / DSM 13698 / CCUG 18766 / IAM 14443 / JCM 21226 / LMG 7866 / NBRC 102419 / NCTC 12128 / CDC 0568-73), this protein is 3-keto-L-gulonate-6-phosphate decarboxylase UlaD.